The chain runs to 264 residues: Thymidylate synthase (264 aa).

Position 21 (Arg21) interacts with dUMP. Position 51 (His51) interacts with (6R)-5,10-methylene-5,6,7,8-tetrahydrofolate. 126 to 127 is a dUMP binding site; sequence RR. Catalysis depends on Cys146, which acts as the Nucleophile. DUMP contacts are provided by residues 166 to 169, Asn177, and 207 to 209; these read RSAD and HLY. Asp169 provides a ligand contact to (6R)-5,10-methylene-5,6,7,8-tetrahydrofolate. Ala263 provides a ligand contact to (6R)-5,10-methylene-5,6,7,8-tetrahydrofolate.

It belongs to the thymidylate synthase family. Bacterial-type ThyA subfamily. Homodimer.

It is found in the cytoplasm. The catalysed reaction is dUMP + (6R)-5,10-methylene-5,6,7,8-tetrahydrofolate = 7,8-dihydrofolate + dTMP. It participates in pyrimidine metabolism; dTTP biosynthesis. In terms of biological role, catalyzes the reductive methylation of 2'-deoxyuridine-5'-monophosphate (dUMP) to 2'-deoxythymidine-5'-monophosphate (dTMP) while utilizing 5,10-methylenetetrahydrofolate (mTHF) as the methyl donor and reductant in the reaction, yielding dihydrofolate (DHF) as a by-product. This enzymatic reaction provides an intracellular de novo source of dTMP, an essential precursor for DNA biosynthesis. The protein is Thymidylate synthase of Mesorhizobium japonicum (strain LMG 29417 / CECT 9101 / MAFF 303099) (Mesorhizobium loti (strain MAFF 303099)).